The following is a 243-amino-acid chain: 1-(5-phosphoribosyl)-5-[(5-phosphoribosylamino)methylideneamino] imidazole-4-carboxamide isomerase (243 aa).

Asp-8 acts as the Proton acceptor in catalysis. The active-site Proton donor is the Asp-130.

It belongs to the HisA/HisF family.

The protein resides in the cytoplasm. The catalysed reaction is 1-(5-phospho-beta-D-ribosyl)-5-[(5-phospho-beta-D-ribosylamino)methylideneamino]imidazole-4-carboxamide = 5-[(5-phospho-1-deoxy-D-ribulos-1-ylimino)methylamino]-1-(5-phospho-beta-D-ribosyl)imidazole-4-carboxamide. Its pathway is amino-acid biosynthesis; L-histidine biosynthesis; L-histidine from 5-phospho-alpha-D-ribose 1-diphosphate: step 4/9. The protein is 1-(5-phosphoribosyl)-5-[(5-phosphoribosylamino)methylideneamino] imidazole-4-carboxamide isomerase of Saccharophagus degradans (strain 2-40 / ATCC 43961 / DSM 17024).